We begin with the raw amino-acid sequence, 92 residues long: Long neurotoxin 469 (92 aa).

Residues 1–21 (MKTLLLTLVVVTIVCLDLGDS) form the signal peptide. Intrachain disulfides connect cysteine 24–cysteine 41, cysteine 34–cysteine 62, cysteine 47–cysteine 51, cysteine 66–cysteine 77, and cysteine 78–cysteine 83.

The protein belongs to the three-finger toxin family. Long-chain subfamily. Type II alpha-neurotoxin sub-subfamily. As to expression, expressed by the venom gland.

Its subcellular location is the secreted. In terms of biological role, binds with high affinity to muscular (alpha-1/CHRNA1) and neuronal (alpha-7/CHRNA7) nicotinic acetylcholine receptor (nAChR) and inhibits acetylcholine from binding to the receptor, thereby impairing neuromuscular and neuronal transmission. This chain is Long neurotoxin 469, found in Drysdalia coronoides (White-lipped snake).